A 496-amino-acid chain; its full sequence is Lysine--tRNA ligase (496 aa).

Mg(2+)-binding residues include E407 and E414.

Belongs to the class-II aminoacyl-tRNA synthetase family. Homodimer. Mg(2+) serves as cofactor.

It localises to the cytoplasm. The enzyme catalyses tRNA(Lys) + L-lysine + ATP = L-lysyl-tRNA(Lys) + AMP + diphosphate. In Staphylococcus haemolyticus (strain JCSC1435), this protein is Lysine--tRNA ligase.